A 493-amino-acid polypeptide reads, in one-letter code: Occludin (493 aa).

At 1–47 (MYSRPSNYAPSKDVYGGEMRSQPAYSYYPEEEIQHFYRWSSPPGIIK) the chain is on the cytoplasmic side. An MARVEL domain is found at 41-250 (SPPGIIKIMS…IIFFAVKTRK (210 aa)). Residues 48-70 (IMSILIVVMCVGIFACVASTLPW) form a helical membrane-spanning segment. The Extracellular portion of the chain corresponds to 71-116 (DLDITGQSMGYGMGSGSYSGGYTGYGFGGSQMGLGFAYGGNYTDPR). A helical transmembrane segment spans residues 117 to 141 (AAKGFILAMAAFCFIIGLVIFVMLV). Over 142 to 151 (TRTPLSTSRK) the chain is Cytoplasmic. A helical transmembrane segment spans residues 152–176 (FYLIVIIVSAIIGGLVFIATIVYTV). The Extracellular segment spans residues 177–224 (GVNPVAQASGSAFYTQIVSICNQFYSPVQTGVFVNQYLYHYCVVEPQE). C197 and C218 are joined by a disulfide. A helical membrane pass occupies residues 225–246 (AIAIVLGFLIVVAFAIIIFFAV). The Cytoplasmic segment spans residues 247-493 (KTRKKINQYG…IKQMVSNYDK (247 aa)). Positions 334–407 (YGMSPRHYSS…TKQRQEYKQE (74 aa)) are disordered. Residues 352 to 361 (APPKKRPGKP) show a composition bias toward basic residues. T375 is subject to Phosphothreonine; by CK2; in vitro. S379 is modified (phosphoserine; by CK2; in vitro). Residues 379–389 (SADELEDDSWD) are compositionally biased toward acidic residues. The region spanning 386 to 493 (DSWDSEYPPI…IKQMVSNYDK (108 aa)) is the OCEL domain. Residues 396–428 (TQTKQRQEYKQEFASDLHEYKRLQAELDELSKI) adopt a coiled-coil conformation.

The protein belongs to the ELL/occludin family. In terms of assembly, interacts in vitro with cingulin, possibly directly. Interacts with ZO-1. Post-translationally, phosphorylated. As to expression, localized at tight junctions of both epithelial and endothelial cells.

It localises to the cell membrane. The protein resides in the cell junction. It is found in the tight junction. In terms of biological role, probably plays a role in the formation and regulation of the tight junction (TJ) paracellular permeability barrier. The sequence is that of Occludin (ocln) from Xenopus laevis (African clawed frog).